The sequence spans 204 residues: Ribonuclease HII (204 aa).

Residues 13-204 enclose the RNase H type-2 domain; it reads GPVAGCDEAG…VRRAARLHSS (192 aa). A divalent metal cation contacts are provided by D19, E20, and D113.

This sequence belongs to the RNase HII family. Mn(2+) is required as a cofactor. It depends on Mg(2+) as a cofactor.

It localises to the cytoplasm. It carries out the reaction Endonucleolytic cleavage to 5'-phosphomonoester.. Functionally, endonuclease that specifically degrades the RNA of RNA-DNA hybrids. This Cutibacterium acnes (strain DSM 16379 / KPA171202) (Propionibacterium acnes) protein is Ribonuclease HII.